An 871-amino-acid polypeptide reads, in one-letter code: Protein argonaute-2 (871 aa).

In terms of domain architecture, PAZ spans 232 to 351 (PVIEFMCEVL…LPLEVCNIVA (120 aa)). Interaction with guide RNA stretches follow at residues 314–319 (YFKDRH) and 536–578 (GKTP…LCLK). The Piwi domain maps to 529–830 (LVVVILPGKT…VAFRARYHLV (302 aa)). The interaction with GW182 family members stretch occupies residues 599-602 (FQQP). A divalent metal cation is bound at residue Asp609. Positions 662 to 672 (LIQFYKSTRFK) are interaction with GW182 family members. Residue Asp681 coordinates a divalent metal cation. Interaction with guide RNA regions lie at residues 721–722 (KR), 765–773 (HAGIQGTSR), and 802–824 (YVRC…VAFR). A divalent metal cation is bound at residue His819. Residues 834-856 (HDSAEGSHTSGQSNGRDQQALAK) are disordered. Residues 839–850 (GSHTSGQSNGRD) show a composition bias toward polar residues.

The protein belongs to the argonaute family. Ago subfamily. In terms of assembly, component of the RISC loading complex (RLC), or micro-RNA (miRNA) loading complex (miRLC), which is composed of dicer1, ago2 and tarbp2. Note that the trimeric RLC/miRLC is also referred to as RISC. Requires Mg(2+) as cofactor. Mn(2+) serves as cofactor.

It is found in the cytoplasm. Its subcellular location is the P-body. It carries out the reaction Endonucleolytic cleavage to 5'-phosphomonoester.. Functionally, required for RNA-mediated gene silencing (RNAi) by the RNA-induced silencing complex (RISC). The 'minimal RISC' appears to include ago2 bound to a short guide RNA such as a microRNA (miRNA) or short interfering RNA (siRNA). These guide RNAs direct RISC to complementary mRNAs that are targets for RISC-mediated gene silencing. The precise mechanism of gene silencing depends on the degree of complementarity between the miRNA or siRNA and its target. Binding of RISC to a perfectly complementary mRNA generally results in silencing due to endonucleolytic cleavage of the mRNA specifically by ago2. Binding of RISC to a partially complementary mRNA results in silencing through inhibition of translation, and this is independent of endonuclease activity. The inhibition of translational initiation leads to the accumulation of the affected mRNA in cytoplasmic processing bodies (P-bodies), where mRNA degradation may subsequently occur. The chain is Protein argonaute-2 (ago2) from Xenopus tropicalis (Western clawed frog).